Here is a 183-residue protein sequence, read N- to C-terminus: Endoribonuclease YbeY (183 aa).

The Zn(2+) site is built by His142, His146, and His152.

Belongs to the endoribonuclease YbeY family. It depends on Zn(2+) as a cofactor.

Its subcellular location is the cytoplasm. Functionally, single strand-specific metallo-endoribonuclease involved in late-stage 70S ribosome quality control and in maturation of the 3' terminus of the 16S rRNA. In Trichodesmium erythraeum (strain IMS101), this protein is Endoribonuclease YbeY.